The chain runs to 455 residues: Glycosyl hydrolase family 109 protein (455 aa).

A signal peptide (tat-type signal) is located at residues 1–33; that stretch reads MAGIDRRGFLKASMASVAAAALAGCASQQGTSA. NAD(+) is bound by residues 62 to 63, aspartate 84, glutamine 112, 133 to 136, 153 to 154, and asparagine 182; these read ER, WALH, and EV. Residues tyrosine 211, arginine 230, 242-245, and tyrosine 324 contribute to the substrate site; that span reads YPTH. Tyrosine 242 is a binding site for NAD(+).

It belongs to the Gfo/Idh/MocA family. Glycosyl hydrolase 109 subfamily. NAD(+) is required as a cofactor. Post-translationally, predicted to be exported by the Tat system. The position of the signal peptide cleavage has not been experimentally proven.

Functionally, glycosidase. This chain is Glycosyl hydrolase family 109 protein, found in Shewanella amazonensis (strain ATCC BAA-1098 / SB2B).